Here is a 112-residue protein sequence, read N- to C-terminus: Small ribosomal subunit protein bS6 (112 aa).

Belongs to the bacterial ribosomal protein bS6 family.

Its function is as follows. Binds together with bS18 to 16S ribosomal RNA. This Chlamydia pneumoniae (Chlamydophila pneumoniae) protein is Small ribosomal subunit protein bS6 (rpsF).